The following is a 319-amino-acid chain: Aspartate carbamoyltransferase catalytic subunit (319 aa).

The carbamoyl phosphate site is built by Arg-55 and Thr-56. Lys-83 contacts L-aspartate. Carbamoyl phosphate is bound by residues Arg-105, His-144, and Gln-147. Arg-177 and Arg-231 together coordinate L-aspartate. The carbamoyl phosphate site is built by Gly-272 and Pro-273.

This sequence belongs to the aspartate/ornithine carbamoyltransferase superfamily. ATCase family. As to quaternary structure, heterododecamer (2C3:3R2) of six catalytic PyrB chains organized as two trimers (C3), and six regulatory PyrI chains organized as three dimers (R2).

It catalyses the reaction carbamoyl phosphate + L-aspartate = N-carbamoyl-L-aspartate + phosphate + H(+). It functions in the pathway pyrimidine metabolism; UMP biosynthesis via de novo pathway; (S)-dihydroorotate from bicarbonate: step 2/3. Catalyzes the condensation of carbamoyl phosphate and aspartate to form carbamoyl aspartate and inorganic phosphate, the committed step in the de novo pyrimidine nucleotide biosynthesis pathway. The chain is Aspartate carbamoyltransferase catalytic subunit from Nocardia farcinica (strain IFM 10152).